The sequence spans 390 residues: Flagellar P-ring protein (390 aa).

Residues 1–36 (MFFSRKIRSLLLTPKRRWSLILTLCLIFTGINFSTS) form the signal peptide.

This sequence belongs to the FlgI family. In terms of assembly, the basal body constitutes a major portion of the flagellar organelle and consists of four rings (L,P,S, and M) mounted on a central rod.

It localises to the periplasm. It is found in the bacterial flagellum basal body. Assembles around the rod to form the L-ring and probably protects the motor/basal body from shearing forces during rotation. The sequence is that of Flagellar P-ring protein from Desulfotalea psychrophila (strain LSv54 / DSM 12343).